Consider the following 95-residue polypeptide: Aspartyl/glutamyl-tRNA(Asn/Gln) amidotransferase subunit C (95 aa).

It belongs to the GatC family. In terms of assembly, heterotrimer of A, B and C subunits.

The enzyme catalyses L-glutamyl-tRNA(Gln) + L-glutamine + ATP + H2O = L-glutaminyl-tRNA(Gln) + L-glutamate + ADP + phosphate + H(+). It carries out the reaction L-aspartyl-tRNA(Asn) + L-glutamine + ATP + H2O = L-asparaginyl-tRNA(Asn) + L-glutamate + ADP + phosphate + 2 H(+). Allows the formation of correctly charged Asn-tRNA(Asn) or Gln-tRNA(Gln) through the transamidation of misacylated Asp-tRNA(Asn) or Glu-tRNA(Gln) in organisms which lack either or both of asparaginyl-tRNA or glutaminyl-tRNA synthetases. The reaction takes place in the presence of glutamine and ATP through an activated phospho-Asp-tRNA(Asn) or phospho-Glu-tRNA(Gln). In Chlorobium luteolum (strain DSM 273 / BCRC 81028 / 2530) (Pelodictyon luteolum), this protein is Aspartyl/glutamyl-tRNA(Asn/Gln) amidotransferase subunit C.